A 245-amino-acid chain; its full sequence is Orotidine 5'-phosphate decarboxylase (245 aa).

Substrate-binding positions include aspartate 22, lysine 44, 71–80, threonine 131, arginine 192, glutamine 201, glycine 221, and arginine 222; that span reads DLKFHDIPNT. Residue lysine 73 is the Proton donor of the active site.

Belongs to the OMP decarboxylase family. Type 1 subfamily. In terms of assembly, homodimer.

It carries out the reaction orotidine 5'-phosphate + H(+) = UMP + CO2. It functions in the pathway pyrimidine metabolism; UMP biosynthesis via de novo pathway; UMP from orotate: step 2/2. Functionally, catalyzes the decarboxylation of orotidine 5'-monophosphate (OMP) to uridine 5'-monophosphate (UMP). In Shigella flexneri serotype 5b (strain 8401), this protein is Orotidine 5'-phosphate decarboxylase.